The sequence spans 482 residues: Putative alpha-L-fucosidase (482 aa).

The signal sequence occupies residues 1 to 16 (MIFLIFSILFLHLANC). N-linked (GlcNAc...) asparagine glycosylation is found at asparagine 182, asparagine 343, asparagine 359, and asparagine 419.

Belongs to the glycosyl hydrolase 29 family.

It carries out the reaction an alpha-L-fucoside + H2O = L-fucose + an alcohol. In terms of biological role, alpha-L-fucosidase is responsible for hydrolyzing the alpha-1,6-linked fucose joined to the reducing-end N-acetylglucosamine of the carbohydrate moieties of glycoproteins. This Caenorhabditis elegans protein is Putative alpha-L-fucosidase.